The sequence spans 492 residues: MAPVGVEKKLLLGPNGPAVAAAGDLTSEEEEGQSLWSSILSEVSTRARSKLPSGKNILVFGEDGSGKTTLMTKLQGAEHGKKGRGLEYLYLSVHDEDRDDHTRCNVWILDGDLYHKGLLKFAVSAESLPETLVIFVADMSRPWTVMESLQKWASVLREHIDKMKIPPEKMRELERKFVKDFQDYMEPEEGCQGSPQRRGPLTSGSDEENVALPLGDNVLTHNLGIPVLVVCTKCDAVSVLEKEHDYRDEHLDFIQSHLRRFCLQYGAALIYTSVKEEKNLDLLYKYIVHKTYGFHFTTPALVVEKDAVFIPAGWDNEKKIAILHENFTTVKPEDAYEDFIVKPPVRKLVHDKELAAEDEQVFLMKQQSLLAKQPATPTRASESPARGPSGSPRTQGRGGPASVPSSSPGTSVKKPDPNIKNNAASEGVLASFFNSLLSKKTGSPGSPGAGGVQSTAKKSGQKTVLSNVQEELDRMTRKPDSMVTNSSTENEA.

61–68 serves as a coordination point for ATP; it reads GEDGSGKT. 3 disordered regions span residues 187–206, 371–423, and 437–492; these read PEEG…SGSD, AKQP…KNNA, and LSKK…ENEA. Position 194 is a phosphoserine (Ser-194). Polar residues predominate over residues 371 to 381; the sequence is AKQPATPTRAS. 2 positions are modified to phosphoserine: Ser-383 and Ser-391. Omega-N-methylarginine is present on Arg-397. Residues 400 to 412 are compositionally biased toward low complexity; the sequence is PASVPSSSPGTSV. Thr-441 bears the Phosphothreonine mark. Phosphoserine is present on residues Ser-443 and Ser-446. Polar residues predominate over residues 452–469; that stretch reads VQSTAKKSGQKTVLSNVQ. Positions 471–480 are enriched in basic and acidic residues; sequence ELDRMTRKPD. A compositionally biased stretch (polar residues) spans 482–492; sequence MVTNSSTENEA.

It belongs to the dynein light intermediate chain family. As to quaternary structure, homodimer. The cytoplasmic dynein 1 complex consists of two catalytic heavy chains (HCs) and a number of non-catalytic subunits presented by intermediate chains (ICs), light intermediate chains (LICs) and light chains (LCs); the composition seems to vary in respect to the IC, LIC and LC composition. The heavy chain homodimer serves as a scaffold for the probable homodimeric assembly of the respective non-catalytic subunits. The ICs and LICs bind directly to the HC dimer and the LCs assemble on the IC dimer. Interacts with DYNC1H1; DYNC1LI1 and DYNC1LI2 bind mutually exclusive to DYNC1H.

The protein resides in the cytoplasm. It is found in the cytoskeleton. Functionally, acts as one of several non-catalytic accessory components of the cytoplasmic dynein 1 complex that are thought to be involved in linking dynein to cargos and to adapter proteins that regulate dynein function. Cytoplasmic dynein 1 acts as a motor for the intracellular retrograde motility of vesicles and organelles along microtubules. May play a role in binding dynein to membranous organelles or chromosomes. This is Cytoplasmic dynein 1 light intermediate chain 2 from Homo sapiens (Human).